A 423-amino-acid chain; its full sequence is NDP-N-acetyl-D-galactosaminuronic acid dehydrogenase (423 aa).

NAD(+) is bound at residue 11–28 (TISVVGLGYIGLPTATVL). Lysine 218 acts as the Proton donor/acceptor in catalysis. The active-site Nucleophile is cysteine 272.

The protein belongs to the UDP-glucose/GDP-mannose dehydrogenase family.

Functionally, probably involved in synthesis of sugar components of EPS I, by converting NDP-N-acetyl-D-galactosamine into NDP-N-acetyl-D-galactosaminuronic acid. The protein is NDP-N-acetyl-D-galactosaminuronic acid dehydrogenase (epsD) of Ralstonia solanacearum (Pseudomonas solanacearum).